The primary structure comprises 256 residues: D-aminoacyl-tRNA deacylase (256 aa).

This sequence belongs to the DtdA deacylase family. As to quaternary structure, monomer. The cofactor is Zn(2+).

The enzyme catalyses a D-aminoacyl-tRNA + H2O = a tRNA + a D-alpha-amino acid + H(+). It carries out the reaction glycyl-tRNA(Ala) + H2O = tRNA(Ala) + glycine + H(+). Functionally, D-aminoacyl-tRNA deacylase with broad substrate specificity. By recycling D-aminoacyl-tRNA to D-amino acids and free tRNA molecules, this enzyme counteracts the toxicity associated with the formation of D-aminoacyl-tRNA entities in vivo. The protein is D-aminoacyl-tRNA deacylase of Thermoplasma volcanium (strain ATCC 51530 / DSM 4299 / JCM 9571 / NBRC 15438 / GSS1).